The chain runs to 156 residues: Ribosomal RNA large subunit methyltransferase H (156 aa).

S-adenosyl-L-methionine-binding positions include Leu-73, Gly-104, and 123–128 (LSPLTL).

It belongs to the RNA methyltransferase RlmH family. In terms of assembly, homodimer.

The protein localises to the cytoplasm. It catalyses the reaction pseudouridine(1915) in 23S rRNA + S-adenosyl-L-methionine = N(3)-methylpseudouridine(1915) in 23S rRNA + S-adenosyl-L-homocysteine + H(+). Its function is as follows. Specifically methylates the pseudouridine at position 1915 (m3Psi1915) in 23S rRNA. The protein is Ribosomal RNA large subunit methyltransferase H of Edwardsiella ictaluri (strain 93-146).